Consider the following 663-residue polypeptide: Polyunsaturated fatty acid lipoxygenase ALOX12 (663 aa).

Residues 2-114 enclose the PLAT domain; that stretch reads GRYRVRVVTG…ILSLPEGTAR (113 aa). The 549-residue stretch at 115-663 folds into the Lipoxygenase domain; that stretch reads LAGDNALDVF…PSRIENSITI (549 aa). Ser246 carries the post-translational modification Phosphoserine. Fe cation-binding residues include His360, His365, His540, Asn544, and Ile663.

It belongs to the lipoxygenase family. It depends on Fe cation as a cofactor. In terms of tissue distribution, found primarily in platelets and in microsomal and cytosolic fractions of the epidermis (at protein level).

The protein resides in the cytoplasm. Its subcellular location is the cytosol. It localises to the membrane. It carries out the reaction (5Z,8Z,11Z,14Z)-eicosatetraenoate + O2 = (12S)-hydroperoxy-(5Z,8Z,10E,14Z)-eicosatetraenoate. The catalysed reaction is (9Z,12Z)-octadecadienoate + O2 = (13S)-hydroperoxy-(9Z,11E)-octadecadienoate. It catalyses the reaction 2 leukotriene A4 + O2 + 2 H2O = 2 lipoxin A4. The enzyme catalyses 2 leukotriene A4 + O2 + 2 H2O = 2 lipoxin B4. It carries out the reaction (5Z,8Z,11Z)-eicosatrienoate + O2 = (12S)-hydroperoxy-(5Z,8Z,10E)-eicosatrienoate. The catalysed reaction is (8Z,11Z,14Z)-eicosatrienoate + O2 = (12S)-hydroperoxy-(8Z,10E,14Z)-eicosatrienoate. It catalyses the reaction (4Z,7Z,10Z,13Z,16Z,19Z)-docosahexaenoate + O2 = (14S)-hydroperoxy-(4Z,7Z,10Z,12E,16Z,19Z)-docosahexaenoate. The enzyme catalyses (7S)-hydroperoxy-(4Z,8E,10Z,13Z,16Z,19Z)-docosahexaenoate + O2 = (7S,14S)-dihydroperoxy-(4Z,8E,10Z,12E,16Z,19Z)-docosahexaenoate. It carries out the reaction (7S)-hydroperoxy-(4Z,8E,10Z,13Z,16Z,19Z)-docosahexaenoate + O2 = (7S,17S)-dihydroperoxy-(4Z,8E,10Z,13Z,15E,19Z)-docosahexaenoate. The catalysed reaction is (14R,15S)-epoxy-(5Z,8Z,11Z)-eicosatrienoate + O2 = (12S)-hydroperoxy-(14R,15S)-epoxy-(5Z,8Z,10E)-eicosatrienoate. It catalyses the reaction (14S,15R)-epoxy-(5Z,8Z,11Z)-eicosatrienoate + O2 = (12S)-hydroperoxy-(14S,15R)-epoxy-(5Z,8Z,10E)-eicosatrienoate. The enzyme catalyses (5Z,8Z,11Z,14Z)-eicosatetraenoate + O2 = (15S)-hydroperoxy-(5Z,8Z,11Z,13E)-eicosatetraenoate. It carries out the reaction (14S)-hydroperoxy-(4Z,7Z,10Z,12E,16Z,19Z)-docosahexaenoate = (13S,14S)-epoxy-(4Z,7Z,9E,11E,16Z,19Z)-docosahexaenoate + H2O. The catalysed reaction is N-(5Z,8Z,11Z,14Z)-eicosatetraenoyl-L-alanine + O2 = N-(15S)-hydroperoxy-(5Z,8Z,11Z,13E)-eicosatetraenoyl-alanine. It catalyses the reaction N-(5Z,8Z,11Z,14Z)-eicosatetraenoyl-L-alanine + O2 = N-(12S)-hydroperoxy-(5Z,8Z,10E,14Z)-eicosatetraenoyl-alanine. The enzyme catalyses N-(5Z,8Z,11Z,14Z)-eicosatetraenoyl-gamma-aminobutanoate + O2 = N-(15S)-hydroperoxy-(5Z,8Z,11Z,13E)-eicosatetraenoyl-gamma-aminobutanoate. It carries out the reaction N-(5Z,8Z,11Z,14Z)-eicosatetraenoyl-gamma-aminobutanoate + O2 = N-(12S)-hydroperoxy-(5Z,8Z,10E,14Z)-eicosatetraenoyl-gamma-aminobutanoate. The catalysed reaction is N-(5Z,8Z,11Z,14Z)-eicosatetraenoyl-glycine + O2 = N-(15S)-hydroperoxy-(5Z,8Z,11Z,13E)-eicosatetraenoyl-glycine. It catalyses the reaction N-(5Z,8Z,11Z,14Z)-eicosatetraenoyl-glycine + O2 = N-(12S)-hydroperoxy-(5Z,8Z,10E,14Z)-eicosatetraenoyl-glycine. The enzyme catalyses N-(5Z,8Z,11Z,14Z)-eicosatetraenoyl-taurine + O2 = N-(12S)-hydroperoxy-(5Z,8Z,10E,14Z)-eicosatetraenoyl-taurine. It carries out the reaction N-(5Z,8Z,11Z,14Z)-eicosatetraenoyl-taurine + O2 = N-(15S)-hydroperoxy-(5Z,8Z,11Z,13E)-eicosatetraenoyl-taurine. The catalysed reaction is (5Z,8Z,11Z,14Z,17Z)-eicosapentaenoate + O2 = (12S)-hydroperoxy-(5Z,8Z,10E,14Z,17Z)-eicosapentaenoate. It participates in lipid metabolism; hydroperoxy eicosatetraenoic acid biosynthesis. Its activity is regulated as follows. Activated by EGF. Arachidonic acid conversion is inhibited by (13S,14S)-epoxy-(4Z,7Z,9E,11E,16Z,19Z)-docosahexaenoate (13S,14S-epoxy-DHA). Arachidonate 12-lipoxygenase activity is decreased when PH decreases from 7.4 to 6. Functionally, catalyzes the regio and stereo-specific incorporation of molecular oxygen into free and esterified polyunsaturated fatty acids generating lipid hydroperoxides that can be further reduced to the corresponding hydroxy species. Mainly converts arachidonate ((5Z,8Z,11Z,14Z)-eicosatetraenoate) to the specific bioactive lipid (12S)-hydroperoxyeicosatetraenoate/(12S)-HPETE. Through the production of bioactive lipids like (12S)-HPETE it regulates different biological processes including platelet activation. It can also catalyze the epoxidation of double bonds of polyunsaturated fatty acids such as (14S)-hydroperoxy-docosahexaenoate/(14S)-HPDHA resulting in the formation of (13S,14S)-epoxy-DHA. Furthermore, it may participate in the sequential oxidations of DHA ((4Z,7Z,10Z,13Z,16Z,19Z)-docosahexaenoate) to generate specialized pro-resolving mediators (SPMs) like resolvin D5 ((7S,17S)-diHPDHA) and (7S,14S)-diHPDHA, that actively down-regulate the immune response and have anti-aggregation properties with platelets. An additional function involves a multistep process by which it transforms leukotriene A4/LTA4 into the bioactive lipids lipoxin A4/LXA4 and lipoxin B4/LXB4, both are vasoactive and LXA4 may regulate neutrophil function via occupancy of specific recognition sites. Can also peroxidize linoleate ((9Z,12Z)-octadecadienoate) to (13S)-hydroperoxyoctadecadienoate/ (13S-HPODE). Due to its role in regulating both the expression of the vascular endothelial growth factor (VEGF, an angiogenic factor involved in the survival and metastasis of solid tumors) and the expression of integrin beta-1 (known to affect tumor cell migration and proliferation), it can be regarded as protumorigenic. Important for cell survival, as it may play a role not only in proliferation but also in the prevention of apoptosis in vascular smooth muscle cells. The sequence is that of Polyunsaturated fatty acid lipoxygenase ALOX12 (Alox12) from Mus musculus (Mouse).